The sequence spans 81 residues: Photosystem I iron-sulfur center (81 aa).

4Fe-4S ferredoxin-type domains follow at residues 2–31 (SHSV…MIPW) and 39–68 (IASA…VRVY). 8 residues coordinate [4Fe-4S] cluster: cysteine 11, cysteine 14, cysteine 17, cysteine 21, cysteine 48, cysteine 51, cysteine 54, and cysteine 58.

In terms of assembly, the eukaryotic PSI reaction center is composed of at least 11 subunits. [4Fe-4S] cluster is required as a cofactor.

It is found in the plastid thylakoid membrane. The enzyme catalyses reduced [plastocyanin] + hnu + oxidized [2Fe-2S]-[ferredoxin] = oxidized [plastocyanin] + reduced [2Fe-2S]-[ferredoxin]. In terms of biological role, apoprotein for the two 4Fe-4S centers FA and FB of photosystem I (PSI); essential for photochemical activity. FB is the terminal electron acceptor of PSI, donating electrons to ferredoxin. The C-terminus interacts with PsaA/B/D and helps assemble the protein into the PSI complex. Required for binding of PsaD and PsaE to PSI. PSI is a plastocyanin-ferredoxin oxidoreductase, converting photonic excitation into a charge separation, which transfers an electron from the donor P700 chlorophyll pair to the spectroscopically characterized acceptors A0, A1, FX, FA and FB in turn. The polypeptide is Photosystem I iron-sulfur center (Cuscuta gronovii (Common dodder)).